A 338-amino-acid chain; its full sequence is Ribosomal RNA small subunit methyltransferase C (338 aa).

The protein belongs to the methyltransferase superfamily. RsmC family. Monomer.

The protein localises to the cytoplasm. It catalyses the reaction guanosine(1207) in 16S rRNA + S-adenosyl-L-methionine = N(2)-methylguanosine(1207) in 16S rRNA + S-adenosyl-L-homocysteine + H(+). In terms of biological role, specifically methylates the guanine in position 1207 of 16S rRNA in the 30S particle. This is Ribosomal RNA small subunit methyltransferase C from Buchnera aphidicola subsp. Acyrthosiphon pisum (strain APS) (Acyrthosiphon pisum symbiotic bacterium).